The following is a 475-amino-acid chain: Glutamyl-tRNA(Gln) amidotransferase subunit A (475 aa).

Active-site charge relay system residues include Lys-69 and Ser-144. Ser-168 (acyl-ester intermediate) is an active-site residue.

The protein belongs to the amidase family. GatA subfamily. As to quaternary structure, heterotrimer of A, B and C subunits.

The catalysed reaction is L-glutamyl-tRNA(Gln) + L-glutamine + ATP + H2O = L-glutaminyl-tRNA(Gln) + L-glutamate + ADP + phosphate + H(+). In terms of biological role, allows the formation of correctly charged Gln-tRNA(Gln) through the transamidation of misacylated Glu-tRNA(Gln) in organisms which lack glutaminyl-tRNA synthetase. The reaction takes place in the presence of glutamine and ATP through an activated gamma-phospho-Glu-tRNA(Gln). The protein is Glutamyl-tRNA(Gln) amidotransferase subunit A of Methanosarcina barkeri (strain Fusaro / DSM 804).